Here is a 130-residue protein sequence, read N- to C-terminus: Large ribosomal subunit protein bL19 (130 aa).

Belongs to the bacterial ribosomal protein bL19 family.

This protein is located at the 30S-50S ribosomal subunit interface and may play a role in the structure and function of the aminoacyl-tRNA binding site. The chain is Large ribosomal subunit protein bL19 from Mycoplasma mycoides subsp. mycoides SC (strain CCUG 32753 / NCTC 10114 / PG1).